Here is a 138-residue protein sequence, read N- to C-terminus: Large ribosomal subunit protein uL16 (138 aa).

Over residues 1–17 (MLQPKRTKFRKQHKGRN) the composition is skewed to basic residues. A disordered region spans residues 1–22 (MLQPKRTKFRKQHKGRNRGVAT).

It belongs to the universal ribosomal protein uL16 family. As to quaternary structure, part of the 50S ribosomal subunit.

Its function is as follows. Binds 23S rRNA and is also seen to make contacts with the A and possibly P site tRNAs. The sequence is that of Large ribosomal subunit protein uL16 from Acidithiobacillus ferrooxidans (strain ATCC 23270 / DSM 14882 / CIP 104768 / NCIMB 8455) (Ferrobacillus ferrooxidans (strain ATCC 23270)).